Reading from the N-terminus, the 130-residue chain is S-adenosylmethionine decarboxylase proenzyme (130 aa).

Serine 66 (schiff-base intermediate with substrate; via pyruvic acid) is an active-site residue. The residue at position 66 (serine 66) is a Pyruvic acid (Ser); by autocatalysis. The active-site Proton acceptor; for processing activity is histidine 71. Cysteine 86 serves as the catalytic Proton donor; for catalytic activity.

It belongs to the prokaryotic AdoMetDC family. Type 1 subfamily. As to quaternary structure, heterotetramer of two alpha and two beta chains arranged as a dimer of alpha/beta heterodimers. It depends on pyruvate as a cofactor. Is synthesized initially as an inactive proenzyme. Formation of the active enzyme involves a self-maturation process in which the active site pyruvoyl group is generated from an internal serine residue via an autocatalytic post-translational modification. Two non-identical subunits are generated from the proenzyme in this reaction, and the pyruvate is formed at the N-terminus of the alpha chain, which is derived from the carboxyl end of the proenzyme. The post-translation cleavage follows an unusual pathway, termed non-hydrolytic serinolysis, in which the side chain hydroxyl group of the serine supplies its oxygen atom to form the C-terminus of the beta chain, while the remainder of the serine residue undergoes an oxidative deamination to produce ammonia and the pyruvoyl group blocking the N-terminus of the alpha chain.

The enzyme catalyses S-adenosyl-L-methionine + H(+) = S-adenosyl 3-(methylsulfanyl)propylamine + CO2. It functions in the pathway amine and polyamine biosynthesis; S-adenosylmethioninamine biosynthesis; S-adenosylmethioninamine from S-adenosyl-L-methionine: step 1/1. Functionally, catalyzes the decarboxylation of S-adenosylmethionine to S-adenosylmethioninamine (dcAdoMet), the propylamine donor required for the synthesis of the polyamines spermine and spermidine from the diamine putrescine. This Bacillus cereus (strain ATCC 10987 / NRS 248) protein is S-adenosylmethionine decarboxylase proenzyme.